Reading from the N-terminus, the 248-residue chain is DNA repair protein RecO (248 aa).

The protein belongs to the RecO family.

In terms of biological role, involved in DNA repair and RecF pathway recombination. This Rubrobacter xylanophilus (strain DSM 9941 / JCM 11954 / NBRC 16129 / PRD-1) protein is DNA repair protein RecO.